The following is a 191-amino-acid chain: uncharacterized protein (191 aa).

This sequence to B.subtilis GlpP.

This is an uncharacterized protein from Escherichia coli (strain K12).